Consider the following 381-residue polypeptide: Pyrimidine monooxygenase RutA (381 aa).

Residues 66-67 (IK), N132, E141, 157-158 (RY), and S207 contribute to the FMN site.

This sequence belongs to the NtaA/SnaA/DszA monooxygenase family. RutA subfamily.

The catalysed reaction is uracil + FMNH2 + NADH + O2 = (Z)-3-ureidoacrylate + FMN + NAD(+) + H2O + H(+). It carries out the reaction thymine + FMNH2 + NADH + O2 = (Z)-2-methylureidoacrylate + FMN + NAD(+) + H2O + H(+). Catalyzes the pyrimidine ring opening between N-3 and C-4 by an unusual flavin hydroperoxide-catalyzed mechanism, adding oxygen atoms in the process to yield ureidoacrylate peracid, that immediately reacts with FMN forming ureidoacrylate and FMN-N(5)-oxide. The FMN-N(5)-oxide reacts spontaneously with NADH to produce FMN. Requires the flavin reductase RutF to regenerate FMN in vivo. The chain is Pyrimidine monooxygenase RutA from Methylobacterium radiotolerans (strain ATCC 27329 / DSM 1819 / JCM 2831 / NBRC 15690 / NCIMB 10815 / 0-1).